A 542-amino-acid polypeptide reads, in one-letter code: Calcium/calmodulin-dependent protein kinase type II subunit beta (542 aa).

The Protein kinase domain occupies 14–272 (YQLYEDIGKG…AHEALKHPWV (259 aa)). At Tyr-17 the chain carries Phosphotyrosine. Residues 20–28 (IGKGAFSVV) and Lys-43 each bind ATP. Catalysis depends on Asp-136, which acts as the Proton acceptor. Residues 283–292 (HRQETVECLK) form an autoinhibitory domain region. Phosphothreonine; by autocatalysis is present on Thr-287. Positions 291–301 (LKKFNARRKLK) are calmodulin-binding. Phosphothreonine; by autocatalysis occurs at positions 306 and 307. Residues 349 to 407 (ADGVKPQTNSTKNSAAATSPKGTLPPAALEPQTTVIHNPVDGIKESSDSTHTTIEDEDT) are disordered. Residues 354–369 (PQTNSTKNSAAATSPK) show a composition bias toward polar residues. 3 positions are modified to phosphoserine: Ser-367, Ser-394, and Ser-397. 2 positions are modified to phosphothreonine: Thr-400 and Thr-401.

It belongs to the protein kinase superfamily. CAMK Ser/Thr protein kinase family. CaMK subfamily. CAMK2 is composed of 4 different chains: alpha (CAMK2A), beta (CAMK2B), gamma (CAMK2G), and delta (CAMK2D). The different isoforms assemble into homo- or heteromultimeric holoenzymes composed of 12 subunits with two hexameric rings stacked one on top of the other. Interacts with SYNGAP1, CAMK2N2 and MPDZ. Interacts with FOXO3. Interacts (when in a kinase inactive state not associated with calmodulin) with ARC; leading to target ARC to inactive synapses. Interacts with CAMK2N1; this interaction requires CAMK2B activation by Ca(2+). In terms of processing, autophosphorylation of Thr-287 following activation by Ca(2+)/calmodulin. Phosphorylation of Thr-287 locks the kinase into an activated state.

It is found in the cytoplasm. The protein resides in the cytoskeleton. Its subcellular location is the microtubule organizing center. The protein localises to the centrosome. It localises to the sarcoplasmic reticulum membrane. It is found in the synapse. The enzyme catalyses L-seryl-[protein] + ATP = O-phospho-L-seryl-[protein] + ADP + H(+). It catalyses the reaction L-threonyl-[protein] + ATP = O-phospho-L-threonyl-[protein] + ADP + H(+). Its activity is regulated as follows. Activated by Ca(2+)/calmodulin. Binding of calmodulin results in conformational change that relieves intrasteric autoinhibition and allows autophosphorylation of Thr-287 which turns the kinase in a constitutively active form and confers to the kinase a Ca(2+)-independent activity. Calcium/calmodulin-dependent protein kinase that functions autonomously after Ca(2+)/calmodulin-binding and autophosphorylation, and is involved in dendritic spine and synapse formation, neuronal plasticity and regulation of sarcoplasmic reticulum Ca(2+) transport in skeletal muscle. In neurons, plays an essential structural role in the reorganization of the actin cytoskeleton during plasticity by binding and bundling actin filaments in a kinase-independent manner. This structural function is required for correct targeting of CaMK2A, which acts downstream of NMDAR to promote dendritic spine and synapse formation and maintain synaptic plasticity which enables long-term potentiation (LTP) and hippocampus-dependent learning. In developing hippocampal neurons, promotes arborization of the dendritic tree and in mature neurons, promotes dendritic remodeling. Also regulates the migration of developing neurons. Participates in the modulation of skeletal muscle function in response to exercise. In slow-twitch muscles, is involved in regulation of sarcoplasmic reticulum (SR) Ca(2+) transport and in fast-twitch muscle participates in the control of Ca(2+) release from the SR through phosphorylation of triadin, a ryanodine receptor-coupling factor, and phospholamban (PLN/PLB), an endogenous inhibitor of SERCA2A/ATP2A2. In response to interferon-gamma (IFN-gamma) stimulation, catalyzes phosphorylation of STAT1, stimulating the JAK-STAT signaling pathway. Phosphorylates reticulophagy regulator RETREG1 at 'Ser-147' under endoplasmic reticulum stress conditions which enhances RETREG1 oligomerization and its membrane scission and reticulophagy activity. The polypeptide is Calcium/calmodulin-dependent protein kinase type II subunit beta (CAMK2B) (Bos taurus (Bovine)).